The primary structure comprises 140 residues: MTIQYTFSMIKPDAIKRNKIGQVNTYLENAGLKIVAQKMKFLTKYEAACFYDEHRARPFFNSLVEYITSGAVVLQVLKGEDAITLNRTVMGATNPAEAEAGTIRKDLGESIEANSIHGSDSENSAKREIEFFFNKSEIIE.

ATP-binding residues include lysine 11, phenylalanine 59, arginine 87, threonine 93, arginine 104, and asparagine 114. Histidine 117 functions as the Pros-phosphohistidine intermediate in the catalytic mechanism.

Belongs to the NDK family. As to quaternary structure, homotetramer. It depends on Mg(2+) as a cofactor.

The protein resides in the cytoplasm. The catalysed reaction is a 2'-deoxyribonucleoside 5'-diphosphate + ATP = a 2'-deoxyribonucleoside 5'-triphosphate + ADP. It carries out the reaction a ribonucleoside 5'-diphosphate + ATP = a ribonucleoside 5'-triphosphate + ADP. Functionally, major role in the synthesis of nucleoside triphosphates other than ATP. The ATP gamma phosphate is transferred to the NDP beta phosphate via a ping-pong mechanism, using a phosphorylated active-site intermediate. The sequence is that of Nucleoside diphosphate kinase from Rickettsia conorii (strain ATCC VR-613 / Malish 7).